The primary structure comprises 368 residues: UDP-N-acetylglucosamine--N-acetylmuramyl-(pentapeptide) pyrophosphoryl-undecaprenol N-acetylglucosamine transferase (368 aa).

UDP-N-acetyl-alpha-D-glucosamine contacts are provided by residues 10-12, asparagine 126, serine 200, isoleucine 255, and glutamine 300; that span reads TGG.

Belongs to the glycosyltransferase 28 family. MurG subfamily.

The protein localises to the cell membrane. It carries out the reaction Mur2Ac(oyl-L-Ala-gamma-D-Glu-L-Lys-D-Ala-D-Ala)-di-trans,octa-cis-undecaprenyl diphosphate + UDP-N-acetyl-alpha-D-glucosamine = beta-D-GlcNAc-(1-&gt;4)-Mur2Ac(oyl-L-Ala-gamma-D-Glu-L-Lys-D-Ala-D-Ala)-di-trans,octa-cis-undecaprenyl diphosphate + UDP + H(+). Its pathway is cell wall biogenesis; peptidoglycan biosynthesis. Functionally, cell wall formation. Catalyzes the transfer of a GlcNAc subunit on undecaprenyl-pyrophosphoryl-MurNAc-pentapeptide (lipid intermediate I) to form undecaprenyl-pyrophosphoryl-MurNAc-(pentapeptide)GlcNAc (lipid intermediate II). The chain is UDP-N-acetylglucosamine--N-acetylmuramyl-(pentapeptide) pyrophosphoryl-undecaprenol N-acetylglucosamine transferase from Lactobacillus acidophilus (strain ATCC 700396 / NCK56 / N2 / NCFM).